The sequence spans 253 residues: Triosephosphate isomerase (253 aa).

9-11 (NWK) provides a ligand contact to substrate. Histidine 95 serves as the catalytic Electrophile. The active-site Proton acceptor is the glutamate 167. Substrate-binding positions include glycine 173, serine 213, and 234–235 (GG). Serine 213 carries the post-translational modification Phosphoserine.

Belongs to the triosephosphate isomerase family. In terms of assembly, homodimer.

The protein localises to the cytoplasm. The enzyme catalyses D-glyceraldehyde 3-phosphate = dihydroxyacetone phosphate. It functions in the pathway carbohydrate biosynthesis; gluconeogenesis. It participates in carbohydrate degradation; glycolysis; D-glyceraldehyde 3-phosphate from glycerone phosphate: step 1/1. Involved in the gluconeogenesis. Catalyzes stereospecifically the conversion of dihydroxyacetone phosphate (DHAP) to D-glyceraldehyde-3-phosphate (G3P). The polypeptide is Triosephosphate isomerase (Geobacillus thermodenitrificans (strain NG80-2)).